The sequence spans 340 residues: Methionine import ATP-binding protein MetN 1 (340 aa).

Residues 2–242 enclose the ABC transporter domain; it reads IRLENVSVDF…PQHAYTKQLV (241 aa). 39–46 is a binding site for ATP; it reads GTSGAGKS.

This sequence belongs to the ABC transporter superfamily. Methionine importer (TC 3.A.1.24) family. The complex is composed of two ATP-binding proteins (MetN), two transmembrane proteins (MetI) and a solute-binding protein (MetQ).

It localises to the cell inner membrane. The catalysed reaction is L-methionine(out) + ATP + H2O = L-methionine(in) + ADP + phosphate + H(+). It catalyses the reaction D-methionine(out) + ATP + H2O = D-methionine(in) + ADP + phosphate + H(+). Functionally, part of the ABC transporter complex MetNIQ involved in methionine import. Responsible for energy coupling to the transport system. In Pectobacterium atrosepticum (strain SCRI 1043 / ATCC BAA-672) (Erwinia carotovora subsp. atroseptica), this protein is Methionine import ATP-binding protein MetN 1.